A 168-amino-acid chain; its full sequence is Cytolysin secretion protein (168 aa).

The protein is Cytolysin secretion protein (vvhB) of Vibrio vulnificus (strain CMCP6).